The following is a 390-amino-acid chain: Trehalose-phosphate phosphatase (390 aa).

The active-site Nucleophile is the aspartate 150. Residues aspartate 150, aspartate 152, and aspartate 333 each contribute to the Mg(2+) site. 150 to 152 (DFD) is a substrate binding site.

It belongs to the trehalose phosphatase family. The cofactor is Mg(2+).

It catalyses the reaction alpha,alpha-trehalose 6-phosphate + H2O = alpha,alpha-trehalose + phosphate. It functions in the pathway glycan biosynthesis; trehalose biosynthesis. Its function is as follows. Removes the phosphate from trehalose 6-phosphate to produce free trehalose. The chain is Trehalose-phosphate phosphatase (otsB) from Mycobacterium ulcerans (strain Agy99).